We begin with the raw amino-acid sequence, 484 residues long: tRNA nucleotidyltransferase cca2 (484 aa).

The B/A element signature appears at 122 to 124; the sequence is RAE. Residues 125–142 form a flexible loop region; it reads SYDDKSRIPSVTPGTVET. Positions 234–244 match the ERhxxExxxhh motif motif; that stretch reads ERVGEEIEKML.

The protein belongs to the tRNA nucleotidyltransferase/poly(A) polymerase family.

Its subcellular location is the cytoplasm. The catalysed reaction is a tRNA with a 3' CC end + ATP = a tRNA with a 3' CCA end + diphosphate. Its function is as follows. tRNA nucleotidyltransferase involved in the synthesis of the tRNA CCA terminus. In contrast to what is usually observed in eukaryotes for which one enzyme synthesizes the whole tRNA CCA terminus, in S.pombe, cca1 specifically adds two cytidine residues to a tRNA substrate lacking this sequence while cca2 specifically adds the terminal adenosine residue thereby completing the CCA sequence. The polypeptide is tRNA nucleotidyltransferase cca2 (Schizosaccharomyces pombe (strain 972 / ATCC 24843) (Fission yeast)).